The following is an 829-amino-acid chain: MVEAGAKISKGGTQQAAGHGLEGYASDGSTDLRSAGAAEHETQDSAKAQENEASANSMDDGLELGRRGQGVSPVLTPPTEEEGDAPAQKNRRQRLKERKATAAAAGALPGIGRARSGSVKEGGSPKAAGAESPRRGAGAAAKDAKISERAEGAGSPQQRKQGTGAAAPGSPPRRRLEAAEPPATPPRRKQAEGEQSRPEGEQGRPENKNKKAKDKHDDLPTRGPGTRRPQVRAVPPPLSEELKNEAFRKTLERVETVAPEVPLQAAEQRSEPSDFDLIINRLRVNAQEYMSQDEQAQENLQEGVRQLKSSYTEFLQTIQPEEKKKGDVEELDEEEEEMRKIDWQFWTSVVNNFATVAKNDSAKLEEKVSDGIPKQIRGIIWQLISNSKSKEIRQLYQDLLQIPSEHEKAIQRDISRTKFIPVDKTESLFNVLKAYSLFDPEVGYTQGMAFVTAPLLINVWEEADAFGLLIKLMKNYGLREFFLPDMPGLQLKLYEFDRLLEENSPQLYNHLIRLGIRSSMYATQWFLTLFAYKFPLGFVLRILDVIFVEGIESLLKFAVILMLKNESVLVQLKFDKLLDFLKDGLFNYYLKENVRKRQEGKEDTNAIQNAEVSDSSSKSSTVGSEILGVEYNINVFIQDAIREVKITPIQLRRYSSEYEEIHQLEFQREAQYEEMRIKNRQLQREVRKLEHDYTLLNREHIMLANELIQNRLKIETLNDENKDLKLTVDVLKRHLSDEMRKQTLPNPDAQIPTDLKEDLEKTMQRNLEVMNQNQELEDKVTALERQVKQLKKNRANTSVEHGEDSSSEPRVRSHIVTPSISSWTFKKPW.

Positions 1-243 are disordered; sequence MVEAGAKISK…VPPPLSEELK (243 aa). Residues 38-50 are compositionally biased toward basic and acidic residues; the sequence is AEHETQDSAKAQE. Positions 101–115 are enriched in low complexity; the sequence is TAAAAGALPGIGRAR. 2 stretches are compositionally biased toward basic and acidic residues: residues 142–151 and 189–220; these read KDAKISERAE and KQAE…DDLP. Positions 279–341 form a coiled coil; it reads INRLRVNAQE…DEEEEEMRKI (63 aa). The region spanning 371–550 is the Rab-GAP TBC domain; that stretch reads GIPKQIRGII…RILDVIFVEG (180 aa). Disordered stretches follow at residues 600-620 and 790-812; these read GKED…SKSS and LKKN…PRVR. Residues 666–803 are a coiled coil; sequence FQREAQYEEM…RANTSVEHGE (138 aa). Residues 800-811 are compositionally biased toward basic and acidic residues; that stretch reads EHGEDSSSEPRV.

Belongs to the GYP5 family.

Its subcellular location is the cytoplasm. GTPase-activating protein which accelerates the GTP hydrolysis rate of several GTPases. Involved in ER to Golgi trafficking and polarized exocytosis. The chain is GTPase-activating protein GYP5 (GYP5) from Eremothecium gossypii (strain ATCC 10895 / CBS 109.51 / FGSC 9923 / NRRL Y-1056) (Yeast).